The primary structure comprises 328 residues: Nuclear transcription factor Y subunit A-8 (328 aa).

The segment at 54–86 (KNISFQDQDSSSTLSSAQSSNDVTSSGDDNPSR) is disordered. Low complexity predominate over residues 57 to 75 (SFQDQDSSSTLSSAQSSND). Residues 76–86 (VTSSGDDNPSR) show a composition bias toward polar residues. The Subunit association domain (SAD) motif lies at 175–198 (FVNAKQFHAIMRRRQQRAKLEAQN). Positions 205-230 (KPYLHESRHVHALKRPRGSGGRFLNT) form a DNA-binding region, NFYA/HAP2-type.

This sequence belongs to the NFYA/HAP2 subunit family. Heterotrimeric transcription factor composed of three components, NF-YA, NF-YB and NF-YC. NF-YB and NF-YC must interact and dimerize for NF-YA association and DNA binding. As to expression, expressed in the whole plant, except roots.

It is found in the nucleus. In terms of biological role, stimulates the transcription of various genes by recognizing and binding to a CCAAT motif in promoters. This Arabidopsis thaliana (Mouse-ear cress) protein is Nuclear transcription factor Y subunit A-8 (NFYA8).